A 183-amino-acid chain; its full sequence is Translocon-associated protein subunit beta (183 aa).

A signal peptide spans 1–17 (MRLLAVVVLALLAVSQA). The Lumenal portion of the chain corresponds to 18–146 (EEGARLLASK…REFDRRFSPH (129 aa)). N-linked (GlcNAc...) (high mannose) asparagine glycosylation occurs at Asn-88. A glycan (N-linked (GlcNAc...) asparagine) is linked at Asn-104. Residues 147–167 (FLDWAAFGVMTLPSIGIPLLL) form a helical membrane-spanning segment. Residues 168-183 (WYSSKRKYDTPKPKKN) are Cytoplasmic-facing.

Belongs to the TRAP-beta family. In terms of assembly, heterotetramer of TRAP-alpha, TRAP-beta, TRAP-delta and TRAP-gamma. Interacts with STING1.

The protein resides in the endoplasmic reticulum membrane. Functionally, TRAP proteins are part of a complex whose function is to bind calcium to the ER membrane and thereby regulate the retention of ER resident proteins. The polypeptide is Translocon-associated protein subunit beta (Ssr2) (Mus musculus (Mouse)).